The primary structure comprises 200 residues: Protein GrpE (200 aa).

Over residues methionine 1–serine 11 the composition is skewed to basic and acidic residues. A disordered region spans residues methionine 1–glutamate 43.

This sequence belongs to the GrpE family. Homodimer.

Its subcellular location is the cytoplasm. In terms of biological role, participates actively in the response to hyperosmotic and heat shock by preventing the aggregation of stress-denatured proteins, in association with DnaK and GrpE. It is the nucleotide exchange factor for DnaK and may function as a thermosensor. Unfolded proteins bind initially to DnaJ; upon interaction with the DnaJ-bound protein, DnaK hydrolyzes its bound ATP, resulting in the formation of a stable complex. GrpE releases ADP from DnaK; ATP binding to DnaK triggers the release of the substrate protein, thus completing the reaction cycle. Several rounds of ATP-dependent interactions between DnaJ, DnaK and GrpE are required for fully efficient folding. In Afipia carboxidovorans (strain ATCC 49405 / DSM 1227 / KCTC 32145 / OM5) (Oligotropha carboxidovorans), this protein is Protein GrpE.